We begin with the raw amino-acid sequence, 291 residues long: Probable 2-(5''-triphosphoribosyl)-3'-dephosphocoenzyme-A synthase (291 aa).

It belongs to the CitG/MdcB family.

It catalyses the reaction 3'-dephospho-CoA + ATP = 2'-(5''-triphospho-alpha-D-ribosyl)-3'-dephospho-CoA + adenine. Involved in the formation of 2-(5''-phosphoribosyl)-3'-dephosphocoenzyme-A, the prosthetic group of the acyl-carrier protein of the malonate decarboxylase. The sequence is that of Probable 2-(5''-triphosphoribosyl)-3'-dephosphocoenzyme-A synthase from Pseudomonas syringae pv. tomato (strain ATCC BAA-871 / DC3000).